The primary structure comprises 719 residues: Protein lin-15A (719 aa).

Disordered regions lie at residues 179–199 (FSHFPSEPSPSKPRATREGSQ), 419–464 (YRDH…SISW), 559–626 (LTTA…PTKT), and 684–719 (AKQVAAAPSEPKHIPPTHMEKKPEELLMDPKPEPIF). Residues 570–579 (STSTDSSSSS) are compositionally biased toward low complexity. Residues 604-617 (LLQNKPTHVESSSP) are compositionally biased toward polar residues. Residues 693–719 (EPKHIPPTHMEKKPEELLMDPKPEPIF) show a composition bias toward basic and acidic residues.

It localises to the nucleus. In terms of biological role, synthetic multivulva (synMuv) class A protein. SynMuv proteins are required to repress the induction of vulval development. Acts redundantly with SynMuv class B protein lin-15B, and lin-35 to negatively regulate vulval development, most likely through antagonization of the Ras-signaling pathway. May also negatively regulate vulval development in association with other SynMuv class B proteins such as dpl-1 and efl-1. Regulates let-23 basal activity. Required for the correct expression and/or stability of lin-56. The polypeptide is Protein lin-15A (Caenorhabditis elegans).